The following is a 460-amino-acid chain: Muscarinic acetylcholine receptor M1 (460 aa).

Residues 1-22 (MNTSAPPAVSPNITVLAPGKGP) are Extracellular-facing. N-linked (GlcNAc...) asparagine glycosylation is found at Asn2 and Asn12. Residues 23–48 (WQVAFIGITTGLLSLATVTGNLLVLI) form a helical membrane-spanning segment. Topologically, residues 49–62 (SFKVNTELKTVNNY) are cytoplasmic. Residues 63–84 (FLLSLACADLIIGTFSMNLYTT) form a helical membrane-spanning segment. Topologically, residues 85-95 (YLLMGHWALGT) are extracellular. Residues 96–121 (LACDLWLALDYVASNASVMNLLLISF) form a helical membrane-spanning segment. The cysteines at positions 98 and 178 are disulfide-linked. The Cytoplasmic portion of the chain corresponds to 122–142 (DRYFSVTRPLSYRAKRTPRRA). Residues 143–164 (ALMIGLAWLVSFVLWAPAILFW) form a helical membrane-spanning segment. Residues 165–185 (QYLVGERTVLAGQCYIQFLSQ) are Extracellular-facing. The chain crosses the membrane as a helical span at residues 186-209 (PIITFGTAMAAFYLPVTVMCTLYW). The Cytoplasmic segment spans residues 210–366 (RIYRETESRA…LVKEKKAART (157 aa)). Disordered regions lie at residues 225–256 (LQGS…GTPP), 274–297 (WKEE…EEPG), and 310–351 (EAQA…QLAK). Thr230 bears the Phosphothreonine mark. Residues 238–247 (SSSSERSQPG) show a composition bias toward low complexity. A compositionally biased stretch (basic residues) spans 328–343 (RPTKKGRDRAGKGQKP). Residues 367-390 (LSAILLAFILTWTPYNIMVLVSTF) form a helical membrane-spanning segment. Residues 391-397 (CKDCVPE) lie on the Extracellular side of the membrane. A helical transmembrane segment spans residues 398-420 (TLWELGYWLCYVNSTINPMCYAL). At 421 to 460 (CNKAFRDTFRLLLLCRWDKRRWRKIPKRPGSVHRTPSRQC) the chain is on the cytoplasmic side. A Phosphothreonine modification is found at Thr428. The residue at position 451 (Ser451) is a Phosphoserine. Thr455 bears the Phosphothreonine mark. The residue at position 457 (Ser457) is a Phosphoserine.

It belongs to the G-protein coupled receptor 1 family. Muscarinic acetylcholine receptor subfamily. CHRM1 sub-subfamily. In terms of assembly, interacts with GPRASP2. Interacts with TMEM147.

The protein localises to the cell membrane. It is found in the postsynaptic cell membrane. Its function is as follows. The muscarinic acetylcholine receptor mediates various cellular responses, including inhibition of adenylate cyclase, breakdown of phosphoinositides and modulation of potassium channels through the action of G proteins. Primary transducing effect is Pi turnover. This Pongo abelii (Sumatran orangutan) protein is Muscarinic acetylcholine receptor M1 (CHRM1).